A 237-amino-acid polypeptide reads, in one-letter code: MTPQDFYRTLEKDGFLLSSKQKEQFDTYFKLLVEWNTKINLTAITEKNEVYLKHFYDSIAPILQGFLANEPIKLLDIGAGAGFPSLPMKILFPNLEVTIIDSLNKRISFLTLLAQELGLENVHFFHGRAEDFGQDKAFRGQFDVVTARAVARMQVLSELTIPFLKIGGKLIALKAQAADQELEEAKNALCLLFGKVIKNHSYQLPNGDSRFITIVEKKKETPNKYPRKAGLPNKKPL.

Residues Gly-78, Phe-83, 129–130 (AE), and Arg-148 each bind S-adenosyl-L-methionine.

It belongs to the methyltransferase superfamily. RNA methyltransferase RsmG family.

It localises to the cytoplasm. Its function is as follows. Specifically methylates the N7 position of a guanine in 16S rRNA. In Streptococcus pyogenes serotype M2 (strain MGAS10270), this protein is Ribosomal RNA small subunit methyltransferase G.